Reading from the N-terminus, the 224-residue chain is tRNA (guanine-N(7)-)-methyltransferase (224 aa).

4 residues coordinate S-adenosyl-L-methionine: Glu56, Glu81, Asp108, and Asp131. Residue Asp131 is part of the active site. Substrate-binding positions include Lys135, Asp167, and 202–205; that span reads TKFE.

Belongs to the class I-like SAM-binding methyltransferase superfamily. TrmB family.

It carries out the reaction guanosine(46) in tRNA + S-adenosyl-L-methionine = N(7)-methylguanosine(46) in tRNA + S-adenosyl-L-homocysteine. Its pathway is tRNA modification; N(7)-methylguanine-tRNA biosynthesis. Functionally, catalyzes the formation of N(7)-methylguanine at position 46 (m7G46) in tRNA. This chain is tRNA (guanine-N(7)-)-methyltransferase, found in Nitrosomonas europaea (strain ATCC 19718 / CIP 103999 / KCTC 2705 / NBRC 14298).